The following is a 282-amino-acid chain: Bifunctional protein FolD (282 aa).

Residues 164 to 166 (GRS) and S189 contribute to the NADP(+) site.

It belongs to the tetrahydrofolate dehydrogenase/cyclohydrolase family. In terms of assembly, homodimer.

It carries out the reaction (6R)-5,10-methylene-5,6,7,8-tetrahydrofolate + NADP(+) = (6R)-5,10-methenyltetrahydrofolate + NADPH. The catalysed reaction is (6R)-5,10-methenyltetrahydrofolate + H2O = (6R)-10-formyltetrahydrofolate + H(+). The protein operates within one-carbon metabolism; tetrahydrofolate interconversion. Functionally, catalyzes the oxidation of 5,10-methylenetetrahydrofolate to 5,10-methenyltetrahydrofolate and then the hydrolysis of 5,10-methenyltetrahydrofolate to 10-formyltetrahydrofolate. The polypeptide is Bifunctional protein FolD (Lachnoclostridium phytofermentans (strain ATCC 700394 / DSM 18823 / ISDg) (Clostridium phytofermentans)).